We begin with the raw amino-acid sequence, 361 residues long: Phosphate acyltransferase (361 aa).

Positions 342-361 (ADGAAAEQGPTPRRTAPRQT) are disordered.

It belongs to the PlsX family. As to quaternary structure, homodimer. Probably interacts with PlsY.

It localises to the cytoplasm. The enzyme catalyses a fatty acyl-[ACP] + phosphate = an acyl phosphate + holo-[ACP]. It functions in the pathway lipid metabolism; phospholipid metabolism. In terms of biological role, catalyzes the reversible formation of acyl-phosphate (acyl-PO(4)) from acyl-[acyl-carrier-protein] (acyl-ACP). This enzyme utilizes acyl-ACP as fatty acyl donor, but not acyl-CoA. The polypeptide is Phosphate acyltransferase (Anaeromyxobacter sp. (strain K)).